We begin with the raw amino-acid sequence, 241 residues long: 2-C-methyl-D-erythritol 4-phosphate cytidylyltransferase (241 aa).

It belongs to the IspD/TarI cytidylyltransferase family. IspD subfamily. As to quaternary structure, homodimer.

The enzyme catalyses 2-C-methyl-D-erythritol 4-phosphate + CTP + H(+) = 4-CDP-2-C-methyl-D-erythritol + diphosphate. Its pathway is isoprenoid biosynthesis; isopentenyl diphosphate biosynthesis via DXP pathway; isopentenyl diphosphate from 1-deoxy-D-xylulose 5-phosphate: step 2/6. Functionally, catalyzes the formation of 4-diphosphocytidyl-2-C-methyl-D-erythritol from CTP and 2-C-methyl-D-erythritol 4-phosphate (MEP). The chain is 2-C-methyl-D-erythritol 4-phosphate cytidylyltransferase from Yersinia pestis.